We begin with the raw amino-acid sequence, 148 residues long: MSSSKRIAKELSDLERDPPTSCSAGPVGDDLYHWQASIMGPADSPYAGGVFFLSIHFPTDYPFKPPKISFTTKIYHPNINANGNICLDILKDQWSPALTLSKVLLSICSLLTDANPDDPLVPEIAHIYKTDRPKYEATAREWTKKYAV.

Residues Met-1–Cys-22 form a disordered region. In terms of domain architecture, UBC core spans Ser-2–Val-148. The segment covering Ile-7 to Pro-18 has biased composition (basic and acidic residues). The residue at position 12 (Ser-12) is a Phosphoserine. Residue Cys-86 is the Glycyl thioester intermediate of the active site. Lys-91 is covalently cross-linked (Glycyl lysine isopeptide (Lys-Gly) (interchain with G-Cter in ubiquitin)).

It belongs to the ubiquitin-conjugating enzyme family. Interacts with TUL1. Post-translationally, the N-terminus is blocked.

The enzyme catalyses S-ubiquitinyl-[E1 ubiquitin-activating enzyme]-L-cysteine + [E2 ubiquitin-conjugating enzyme]-L-cysteine = [E1 ubiquitin-activating enzyme]-L-cysteine + S-ubiquitinyl-[E2 ubiquitin-conjugating enzyme]-L-cysteine.. It functions in the pathway protein modification; protein ubiquitination. In terms of biological role, E2 ubiquitin-conjugating enzyme that catalyzes the covalent attachment of ubiquitin to other proteins. Mediates the selective degradation of short-lived and abnormal proteins. Mediates ubiquitination of PEX5. The sequence is that of Ubiquitin-conjugating enzyme E2 4 from Saccharomyces cerevisiae (strain ATCC 204508 / S288c) (Baker's yeast).